A 95-amino-acid polypeptide reads, in one-letter code: Large ribosomal subunit protein bL25 (95 aa).

This sequence belongs to the bacterial ribosomal protein bL25 family. As to quaternary structure, part of the 50S ribosomal subunit; part of the 5S rRNA/L5/L18/L25 subcomplex. Contacts the 5S rRNA. Binds to the 5S rRNA independently of L5 and L18.

Its function is as follows. This is one of the proteins that binds to the 5S RNA in the ribosome where it forms part of the central protuberance. This Haemophilus influenzae (strain 86-028NP) protein is Large ribosomal subunit protein bL25.